Reading from the N-terminus, the 265-residue chain is tRNA (guanine-N(1)-)-methyltransferase (265 aa).

S-adenosyl-L-methionine contacts are provided by residues glycine 110 and 129–134 (LGDFVM). Residues 243–265 (LAAWGAPPPPLPKRRRGAKPNPN) are disordered. Residues 254–265 (PKRRRGAKPNPN) are compositionally biased toward basic residues.

The protein belongs to the RNA methyltransferase TrmD family. As to quaternary structure, homodimer.

The protein resides in the cytoplasm. The catalysed reaction is guanosine(37) in tRNA + S-adenosyl-L-methionine = N(1)-methylguanosine(37) in tRNA + S-adenosyl-L-homocysteine + H(+). Specifically methylates guanosine-37 in various tRNAs. The protein is tRNA (guanine-N(1)-)-methyltransferase of Deinococcus geothermalis (strain DSM 11300 / CIP 105573 / AG-3a).